Consider the following 197-residue polypeptide: MAATPRGTSPVPPDARPRLTVLSGPSGVGKSTVVAHMRKEHPEVWLSVSATTRRPRPGEQHGVHYFFVSDEEMDKLIANGELLEWAEFAGNRYGTPRTAVLERLEAGEPVLLEIDLQGARQVRESMPEARLVFLAPPSWDELVRRLTGRGTEPPEVIERRLAAAKVELAAEPEFDQTLVNTSVEDVARELLALTNVV.

The interval 1–30 (MAATPRGTSPVPPDARPRLTVLSGPSGVGK) is disordered. The 181-residue stretch at 17-197 (PRLTVLSGPS…RELLALTNVV (181 aa)) folds into the Guanylate kinase-like domain. Residue 24-31 (GPSGVGKS) coordinates ATP.

Belongs to the guanylate kinase family.

The protein localises to the cytoplasm. It carries out the reaction GMP + ATP = GDP + ADP. Essential for recycling GMP and indirectly, cGMP. The sequence is that of Guanylate kinase (gmk) from Streptomyces coelicolor (strain ATCC BAA-471 / A3(2) / M145).